The following is a 258-amino-acid chain: Regulatory protein RecX (258 aa).

It belongs to the RecX family.

The protein resides in the cytoplasm. Functionally, modulates RecA activity. This is Regulatory protein RecX from Streptococcus equi subsp. equi (strain 4047).